The following is a 199-amino-acid chain: NAD(P)H dehydrogenase (quinone) (199 aa).

The Flavodoxin-like domain maps to valine 4 to isoleucine 190. FMN is bound by residues serine 10–leucine 15 and threonine 78–phenylalanine 80. Residue tyrosine 12 coordinates NAD(+). Tryptophan 98 is a substrate binding site. Residues serine 113–glycine 119 and histidine 134 contribute to the FMN site.

The protein belongs to the WrbA family. FMN is required as a cofactor.

It catalyses the reaction a quinone + NADH + H(+) = a quinol + NAD(+). It carries out the reaction a quinone + NADPH + H(+) = a quinol + NADP(+). This is NAD(P)H dehydrogenase (quinone) from Caulobacter vibrioides (strain ATCC 19089 / CIP 103742 / CB 15) (Caulobacter crescentus).